The chain runs to 1604 residues: Transposon Ty1-DR4 Gag-Pol polyprotein (1604 aa).

Composition is skewed to polar residues over residues 1 to 23, 48 to 60, and 127 to 152; these read MESQ…SVTS, TKAN…TPAS, and QSQF…GNTF. Disordered regions lie at residues 1 to 93, 126 to 174, and 352 to 421; these read MESQ…MMTQ, PQSQ…PPPM, and GSRN…SKST. Residues 153-165 show a composition bias toward low complexity; it reads TDSSSADSDMTST. The tract at residues 299–401 is RNA-binding; sequence NNGIHINNKV…NSKSKTARAH (103 aa). Residues 402–418 are compositionally biased toward low complexity; that stretch reads NVSTSNNSPSTDNDSIS. A Phosphoserine modification is found at Ser-416. Residue Asp-461 is the For protease activity; shared with dimeric partner of the active site. Residues 583–640 are integrase-type zinc finger-like; the sequence is NVHTSESTRKYPYPFIHRMLAHANAQTIRYSLKNNTITYFNESDVDWSSAIDYQCPDC. Residues 660–835 form the Integrase catalytic domain; sequence NSYEPFQYLH…AGLDISTLLP (176 aa). Residues Asp-671 and Asp-736 each contribute to the Mg(2+) site. Disordered regions lie at residues 956–1087, 1092–1111, and 1130–1187; these read SKAV…ETEK, RSPS…NIVP, and DLPL…DNET. A compositionally biased stretch (low complexity) spans 960-969; that stretch reads SPTDSTPPST. Residues 1005 to 1015 show a composition bias toward polar residues; sequence STPQISNIEST. A compositionally biased stretch (basic and acidic residues) spans 1038–1053; sequence ESSHASKSKDFRHSDS. 2 stretches are compositionally biased toward polar residues: residues 1054–1082 and 1101–1111; these read YSEN…QISD and PENNSSHNIVP. The Bipartite nuclear localization signal motif lies at 1178–1212; it reads KKRSLEDNETEIKVSRDTWNTKNMRSLEPPRSKKR. A Reverse transcriptase Ty1/copia-type domain is found at 1338–1476; sequence NNYYITQLDI…DILGLEIKYQ (139 aa). Residues Asp-1346, Asp-1427, and Asp-1428 each coordinate Mg(2+).

In terms of assembly, the capsid protein forms a homotrimer, from which the VLPs are assembled. The protease is a homodimer, whose active site consists of two apposed aspartic acid residues. In terms of processing, initially, virus-like particles (VLPs) are composed of the structural unprocessed proteins Gag and Gag-Pol, and also contain the host initiator methionine tRNA (tRNA(i)-Met) which serves as a primer for minus-strand DNA synthesis, and a dimer of genomic Ty RNA. Processing of the polyproteins occurs within the particle and proceeds by an ordered pathway, called maturation. First, the protease (PR) is released by autocatalytic cleavage of the Gag-Pol polyprotein yielding capsid protein p45 and a Pol-p154 precursor protein. This cleavage is a prerequisite for subsequent processing of Pol-p154 at the remaining sites to release the mature structural and catalytic proteins. Maturation takes place prior to the RT reaction and is required to produce transposition-competent VLPs.

The protein localises to the cytoplasm. It is found in the nucleus. It catalyses the reaction DNA(n) + a 2'-deoxyribonucleoside 5'-triphosphate = DNA(n+1) + diphosphate. It carries out the reaction Endonucleolytic cleavage to 5'-phosphomonoester.. In terms of biological role, capsid protein (CA) is the structural component of the virus-like particle (VLP), forming the shell that encapsulates the retrotransposons dimeric RNA genome. The particles are assembled from trimer-clustered units and there are holes in the capsid shells that allow for the diffusion of macromolecules. CA also has nucleocapsid-like chaperone activity, promoting primer tRNA(i)-Met annealing to the multipartite primer-binding site (PBS), dimerization of Ty1 RNA and initiation of reverse transcription. The aspartyl protease (PR) mediates the proteolytic cleavages of the Gag and Gag-Pol polyproteins after assembly of the VLP. Functionally, reverse transcriptase/ribonuclease H (RT) is a multifunctional enzyme that catalyzes the conversion of the retro-elements RNA genome into dsDNA within the VLP. The enzyme displays a DNA polymerase activity that can copy either DNA or RNA templates, and a ribonuclease H (RNase H) activity that cleaves the RNA strand of RNA-DNA heteroduplexes during plus-strand synthesis and hydrolyzes RNA primers. The conversion leads to a linear dsDNA copy of the retrotransposon that includes long terminal repeats (LTRs) at both ends. Its function is as follows. Integrase (IN) targets the VLP to the nucleus, where a subparticle preintegration complex (PIC) containing at least integrase and the newly synthesized dsDNA copy of the retrotransposon must transit the nuclear membrane. Once in the nucleus, integrase performs the integration of the dsDNA into the host genome. This is Transposon Ty1-DR4 Gag-Pol polyprotein (TY1B-DR4) from Saccharomyces cerevisiae (strain ATCC 204508 / S288c) (Baker's yeast).